We begin with the raw amino-acid sequence, 329 residues long: GTP 3',8-cyclase (329 aa).

The region spanning Ala-8–Ala-234 is the Radical SAM core domain. Arg-17 is a binding site for GTP. [4Fe-4S] cluster contacts are provided by Cys-24 and Cys-28. An S-adenosyl-L-methionine-binding site is contributed by Tyr-30. Residue Cys-31 participates in [4Fe-4S] cluster binding. Arg-68 provides a ligand contact to GTP. An S-adenosyl-L-methionine-binding site is contributed by Gly-72. Residue Thr-99 coordinates GTP. Residue Ser-123 participates in S-adenosyl-L-methionine binding. Lys-160 is a GTP binding site. Met-194 contributes to the S-adenosyl-L-methionine binding site. [4Fe-4S] cluster is bound by residues Cys-257 and Cys-260. Arg-262–Arg-264 is a binding site for GTP. Cys-274 serves as a coordination point for [4Fe-4S] cluster.

This sequence belongs to the radical SAM superfamily. MoaA family. Monomer and homodimer. The cofactor is [4Fe-4S] cluster.

The enzyme catalyses GTP + AH2 + S-adenosyl-L-methionine = (8S)-3',8-cyclo-7,8-dihydroguanosine 5'-triphosphate + 5'-deoxyadenosine + L-methionine + A + H(+). The protein operates within cofactor biosynthesis; molybdopterin biosynthesis. Catalyzes the cyclization of GTP to (8S)-3',8-cyclo-7,8-dihydroguanosine 5'-triphosphate. The sequence is that of GTP 3',8-cyclase from Pectobacterium atrosepticum (strain SCRI 1043 / ATCC BAA-672) (Erwinia carotovora subsp. atroseptica).